The following is a 415-amino-acid chain: Peptide chain release factor subunit 1 (415 aa).

The protein belongs to the eukaryotic release factor 1 family. As to quaternary structure, heterodimer of two subunits, one of which binds GTP.

It is found in the cytoplasm. In terms of biological role, directs the termination of nascent peptide synthesis (translation) in response to the termination codons UAA, UAG and UGA. This Thermococcus onnurineus (strain NA1) protein is Peptide chain release factor subunit 1.